Here is a 1037-residue protein sequence, read N- to C-terminus: Glycine dehydrogenase (decarboxylating) A, mitochondrial (1037 aa).

The transit peptide at 1-66 (MERARRLANK…LNGFGSQVRT (66 aa)) directs the protein to the mitochondrion. Lys-773 carries the post-translational modification N6-(pyridoxal phosphate)lysine.

This sequence belongs to the GcvP family. As to quaternary structure, homodimer. The glycine cleavage system is composed of four proteins: P, T, L and H. It depends on pyridoxal 5'-phosphate as a cofactor. Expressed in leaves, stems and roots.

It localises to the mitochondrion. It catalyses the reaction N(6)-[(R)-lipoyl]-L-lysyl-[glycine-cleavage complex H protein] + glycine + H(+) = N(6)-[(R)-S(8)-aminomethyldihydrolipoyl]-L-lysyl-[glycine-cleavage complex H protein] + CO2. In terms of biological role, the glycine cleavage system catalyzes the degradation of glycine. The P protein binds the alpha-amino group of glycine through its pyridoxal phosphate cofactor; CO(2) is released and the remaining methylamine moiety is then transferred to the lipoamide cofactor of the H protein. The chain is Glycine dehydrogenase (decarboxylating) A, mitochondrial (GDCSPA) from Flaveria pringlei.